The primary structure comprises 82 residues: RNA-binding protein Hfq (82 aa).

The Sm domain occupies 9–68; the sequence is DPYLNTLRKERVPVSIYLVNGIKLQGQIESFDQFVILLKNTVSQMVYKHAISTVVPSRPV.

It belongs to the Hfq family. In terms of assembly, homohexamer.

RNA chaperone that binds small regulatory RNA (sRNAs) and mRNAs to facilitate mRNA translational regulation in response to envelope stress, environmental stress and changes in metabolite concentrations. Also binds with high specificity to tRNAs. The protein is RNA-binding protein Hfq of Pseudomonas aeruginosa (strain LESB58).